The chain runs to 135 residues: Lactoylglutathione lyase (135 aa).

Positions 2 to 126 (QILHTMLRVG…DGYKIEFIEN (125 aa)) constitute a VOC domain. Residue His-5 coordinates Ni(2+). Position 9 (Arg-9) interacts with substrate. Residue Glu-56 coordinates Ni(2+). Positions 60 and 74 each coordinate substrate. Residues His-74 and Glu-122 each contribute to the Ni(2+) site. Glu-122 (proton donor/acceptor) is an active-site residue.

It belongs to the glyoxalase I family. As to quaternary structure, homodimer. It depends on Ni(2+) as a cofactor.

It carries out the reaction (R)-S-lactoylglutathione = methylglyoxal + glutathione. It functions in the pathway secondary metabolite metabolism; methylglyoxal degradation; (R)-lactate from methylglyoxal: step 1/2. Catalyzes the conversion of hemimercaptal, formed from methylglyoxal and glutathione, to S-lactoylglutathione. This is Lactoylglutathione lyase (gloA) from Haemophilus influenzae (strain ATCC 51907 / DSM 11121 / KW20 / Rd).